The primary structure comprises 386 residues: Bifunctional chorismate mutase/prephenate dehydratase (386 aa).

The Chorismate mutase domain occupies 1 to 92 (MTSENPLLAL…DSVLTQQALL (92 aa)). 7 residues coordinate substrate: arginine 11, arginine 28, lysine 39, aspartate 48, glutamate 52, serine 84, and glutamine 88. One can recognise a Prephenate dehydratase domain in the interval 105 to 285 (RIAFLGPKGS…NFTRFVVLAR (181 aa)). The region spanning 299–376 (TLLMATGQQA…RSMKVLGCYP (78 aa)) is the ACT domain.

It is found in the cytoplasm. It carries out the reaction chorismate = prephenate. The catalysed reaction is prephenate + H(+) = 3-phenylpyruvate + CO2 + H2O. Its pathway is amino-acid biosynthesis; L-phenylalanine biosynthesis; phenylpyruvate from prephenate: step 1/1. It participates in metabolic intermediate biosynthesis; prephenate biosynthesis; prephenate from chorismate: step 1/1. In terms of biological role, catalyzes the Claisen rearrangement of chorismate to prephenate and the decarboxylation/dehydration of prephenate to phenylpyruvate. This is Bifunctional chorismate mutase/prephenate dehydratase (pheA) from Escherichia coli O157:H7.